We begin with the raw amino-acid sequence, 205 residues long: MSHKKQDAFQGLIDALKVLPNVGPKSAQRIAYHLLQHKRKEAEKLVDALQTALKQVDHCARCNTFCEGGLCDICADETRDGRRLMVVHMPADVSNMEAANCHDGLYFVLMGQINTALGMDVSAIALDRLAQRLGGGEVEEIIIATAFTAEGNATAYVLSEFFKNLPYKVSRLSQGIPLGGELEYVDAGTLAQAVYERRLIKEGGA.

The C4-type zinc-finger motif lies at 59 to 74 (CARCNTFCEGGLCDIC). Residues 82–177 (RRLMVVHMPA…KVSRLSQGIP (96 aa)) form the Toprim domain.

The protein belongs to the RecR family.

Its function is as follows. May play a role in DNA repair. It seems to be involved in an RecBC-independent recombinational process of DNA repair. It may act with RecF and RecO. The chain is Recombination protein RecR from Neisseria meningitidis serogroup A / serotype 4A (strain DSM 15465 / Z2491).